A 329-amino-acid chain; its full sequence is Eukaryotic translation initiation factor 3 subunit I (329 aa).

WD repeat units follow at residues 8 to 47 (GHQR…RLGT), 50 to 89 (GHGG…NIAT), 145 to 184 (ITDS…KIHS), 187 to 226 (EHTH…LLKE), and 284 to 323 (GHFG…FDYT).

The protein belongs to the eIF-3 subunit I family. Component of the eukaryotic translation initiation factor 3 (eIF-3) complex.

It is found in the cytoplasm. In terms of biological role, component of the eukaryotic translation initiation factor 3 (eIF-3) complex, which is involved in protein synthesis of a specialized repertoire of mRNAs and, together with other initiation factors, stimulates binding of mRNA and methionyl-tRNAi to the 40S ribosome. The eIF-3 complex specifically targets and initiates translation of a subset of mRNAs involved in cell proliferation. This is Eukaryotic translation initiation factor 3 subunit I from Bombyx mori (Silk moth).